The sequence spans 90 residues: UPF0213 protein lwe0147 (90 aa).

The region spanning 5-83 (NEHFFYVLKC…SRKNKDSYLI (79 aa)) is the GIY-YIG domain.

This sequence belongs to the UPF0213 family.

The polypeptide is UPF0213 protein lwe0147 (Listeria welshimeri serovar 6b (strain ATCC 35897 / DSM 20650 / CCUG 15529 / CIP 8149 / NCTC 11857 / SLCC 5334 / V8)).